Here is a 99-residue protein sequence, read N- to C-terminus: Plastocyanin (99 aa).

The Plastocyanin-like domain maps to 1–99 (VEVLMGGSGG…IGMSGIVTVN (99 aa)). Cu cation contacts are provided by His-37, Cys-84, His-87, and Met-92.

The protein belongs to the plastocyanin family. Cu(2+) serves as cofactor.

The protein localises to the plastid. It is found in the chloroplast thylakoid membrane. Participates in electron transfer between P700 and the cytochrome b6-f complex in photosystem I. The sequence is that of Plastocyanin (PETE) from Ginkgo biloba (Ginkgo).